Here is a 150-residue protein sequence, read N- to C-terminus: Arginine repressor (150 aa).

The protein belongs to the ArgR family.

It is found in the cytoplasm. It functions in the pathway amino-acid biosynthesis; L-arginine biosynthesis [regulation]. Regulates arginine biosynthesis genes. The sequence is that of Arginine repressor from Clostridium botulinum (strain Alaska E43 / Type E3).